The sequence spans 232 residues: Zinc import ATP-binding protein ZnuC (232 aa).

An ABC transporter domain is found at 5–220 (VNLKNIFVFY…PSFIEMFGCY (216 aa)). 37-44 (GPNGSGKS) contributes to the ATP binding site.

The protein belongs to the ABC transporter superfamily. Zinc importer (TC 3.A.1.15.5) family. The complex is composed of two ATP-binding proteins (ZnuC), two transmembrane proteins (ZnuB) and a solute-binding protein (ZnuA).

It is found in the cell membrane. It carries out the reaction Zn(2+)(out) + ATP(in) + H2O(in) = Zn(2+)(in) + ADP(in) + phosphate(in) + H(+)(in). In terms of biological role, part of the ABC transporter complex ZnuABC involved in zinc import. Responsible for energy coupling to the transport system. The sequence is that of Zinc import ATP-binding protein ZnuC from Wigglesworthia glossinidia brevipalpis.